The primary structure comprises 274 residues: Sulfur carrier protein FdhD (274 aa).

The Cysteine persulfide intermediate role is filled by cysteine 121. Residue 258–263 coordinates Mo-bis(molybdopterin guanine dinucleotide); the sequence is FSKPGR.

Belongs to the FdhD family.

Its subcellular location is the cytoplasm. In terms of biological role, required for formate dehydrogenase (FDH) activity. Acts as a sulfur carrier protein that transfers sulfur from IscS to the molybdenum cofactor prior to its insertion into FDH. The chain is Sulfur carrier protein FdhD from Yersinia pseudotuberculosis serotype O:3 (strain YPIII).